A 308-amino-acid chain; its full sequence is Phenylcoumaran benzylic ether reductase Pyrc5 (308 aa).

NADP(+) contacts are provided by residues 11-17 (GGTGYIG), arginine 36, and lysine 45. Lysine 133 (proton acceptor) is an active-site residue. Arginine 137 is an NADP(+) binding site.

It belongs to the NmrA-type oxidoreductase family. Isoflavone reductase subfamily.

It carries out the reaction (-)-dehydrodiconiferyl alcohol + NADPH + H(+) = (S)-isodihydrodehydrodiconiferyl alcohol + NADP(+). The enzyme catalyses (+)-dehydrodiconiferyl alcohol + NADPH + H(+) = (R)-isodihydrodehydrodiconiferyl alcohol + NADP(+). Oxidoreductase involved in lignan biosynthesis. Catalyzes the NADPH-dependent reduction of phenylcoumaran benzylic ethers. Converts dehydrodiconiferyl alcohol (DDC) to isodihydrodehydrodiconiferyl alcohol (IDDDC). This is Phenylcoumaran benzylic ether reductase Pyrc5 from Pyrus communis (Pear).